The following is a 250-amino-acid chain: Probable transcriptional regulatory protein RER_29220 (250 aa).

This sequence belongs to the TACO1 family.

The protein localises to the cytoplasm. This is Probable transcriptional regulatory protein RER_29220 from Rhodococcus erythropolis (strain PR4 / NBRC 100887).